The primary structure comprises 736 residues: Phosphoribosylformylglycinamidine synthase subunit PurL (736 aa).

His50 is a catalytic residue. Residues Tyr53 and Lys92 each coordinate ATP. Glu94 contributes to the Mg(2+) binding site. Residues Ser95–His98 and Arg117 contribute to the substrate site. His96 acts as the Proton acceptor in catalysis. A Mg(2+)-binding site is contributed by Asp118. Residue Gln241 coordinates substrate. Asp269 contributes to the Mg(2+) binding site. Glu313–Gln315 contributes to the substrate binding site. The ATP site is built by Asp495 and Gly532. Asn533 serves as a coordination point for Mg(2+). Position 535 (Ser535) interacts with substrate.

The protein belongs to the FGAMS family. As to quaternary structure, monomer. Part of the FGAM synthase complex composed of 1 PurL, 1 PurQ and 2 PurS subunits.

Its subcellular location is the cytoplasm. The catalysed reaction is N(2)-formyl-N(1)-(5-phospho-beta-D-ribosyl)glycinamide + L-glutamine + ATP + H2O = 2-formamido-N(1)-(5-O-phospho-beta-D-ribosyl)acetamidine + L-glutamate + ADP + phosphate + H(+). The protein operates within purine metabolism; IMP biosynthesis via de novo pathway; 5-amino-1-(5-phospho-D-ribosyl)imidazole from N(2)-formyl-N(1)-(5-phospho-D-ribosyl)glycinamide: step 1/2. Its function is as follows. Part of the phosphoribosylformylglycinamidine synthase complex involved in the purines biosynthetic pathway. Catalyzes the ATP-dependent conversion of formylglycinamide ribonucleotide (FGAR) and glutamine to yield formylglycinamidine ribonucleotide (FGAM) and glutamate. The FGAM synthase complex is composed of three subunits. PurQ produces an ammonia molecule by converting glutamine to glutamate. PurL transfers the ammonia molecule to FGAR to form FGAM in an ATP-dependent manner. PurS interacts with PurQ and PurL and is thought to assist in the transfer of the ammonia molecule from PurQ to PurL. This is Phosphoribosylformylglycinamidine synthase subunit PurL from Bartonella tribocorum (strain CIP 105476 / IBS 506).